A 513-amino-acid polypeptide reads, in one-letter code: Putative thymidine phosphorylase (513 aa).

This sequence belongs to the thymidine/pyrimidine-nucleoside phosphorylase family. Type 2 subfamily.

It catalyses the reaction thymidine + phosphate = 2-deoxy-alpha-D-ribose 1-phosphate + thymine. This chain is Putative thymidine phosphorylase, found in Bradyrhizobium diazoefficiens (strain JCM 10833 / BCRC 13528 / IAM 13628 / NBRC 14792 / USDA 110).